Here is a 338-residue protein sequence, read N- to C-terminus: Anthranilate phosphoribosyltransferase (338 aa).

Residues G78, 81–82, T86, 88–91, 106–114, and S118 contribute to the 5-phospho-alpha-D-ribose 1-diphosphate site; these read GD, NIST, and KHGNRSVSS. G78 is a binding site for anthranilate. Residue S90 participates in Mg(2+) binding. Residue N109 participates in anthranilate binding. Position 164 (R164) interacts with anthranilate. Residues D223 and E224 each contribute to the Mg(2+) site.

It belongs to the anthranilate phosphoribosyltransferase family. Homodimer. It depends on Mg(2+) as a cofactor.

The enzyme catalyses N-(5-phospho-beta-D-ribosyl)anthranilate + diphosphate = 5-phospho-alpha-D-ribose 1-diphosphate + anthranilate. Its pathway is amino-acid biosynthesis; L-tryptophan biosynthesis; L-tryptophan from chorismate: step 2/5. Functionally, catalyzes the transfer of the phosphoribosyl group of 5-phosphorylribose-1-pyrophosphate (PRPP) to anthranilate to yield N-(5'-phosphoribosyl)-anthranilate (PRA). In Bacillus velezensis (strain DSM 23117 / BGSC 10A6 / LMG 26770 / FZB42) (Bacillus amyloliquefaciens subsp. plantarum), this protein is Anthranilate phosphoribosyltransferase.